We begin with the raw amino-acid sequence, 89 residues long: Small ribosomal subunit protein uS15 (89 aa).

Belongs to the universal ribosomal protein uS15 family. In terms of assembly, part of the 30S ribosomal subunit. Forms a bridge to the 50S subunit in the 70S ribosome, contacting the 23S rRNA.

Its function is as follows. One of the primary rRNA binding proteins, it binds directly to 16S rRNA where it helps nucleate assembly of the platform of the 30S subunit by binding and bridging several RNA helices of the 16S rRNA. Forms an intersubunit bridge (bridge B4) with the 23S rRNA of the 50S subunit in the ribosome. This is Small ribosomal subunit protein uS15 from Nitratiruptor sp. (strain SB155-2).